Here is a 998-residue protein sequence, read N- to C-terminus: Kinesin-like protein KIF19 (998 aa).

One can recognise a Kinesin motor domain in the interval 11-346 (QLMVALRVRP…LTYAGRAKNI (336 aa)). 104–111 (GPTGCGKT) contacts ATP. Coiled coils occupy residues 360–391 (HIAQ…RGQA) and 424–452 (EQLA…EVQI). The segment covering 482 to 494 (ECYAKDDSEKDSD) has biased composition (basic and acidic residues). The interval 482–503 (ECYAKDDSEKDSDTGDDQPDIL) is disordered. The stretch at 507 to 552 (EVAAARESIAALVDEQKQLRKQKLALEQRCRELRARGRRLEETLPR) forms a coiled coil. Polar residues-rich tracts occupy residues 662 to 676 (SSLP…SLTP), 684 to 697 (KTLS…QNSA), 746 to 761 (SLGS…SENL), and 836 to 852 (TLQH…STGE). Disordered stretches follow at residues 662–706 (SSLP…TESE), 746–765 (SLGS…SEIP), 794–911 (GTEG…THLL), and 948–998 (KLPP…SRHN). Residues 989–998 (HGKDGCSRHN) show a composition bias toward basic and acidic residues.

It belongs to the TRAFAC class myosin-kinesin ATPase superfamily. Kinesin family.

It localises to the cytoplasm. It is found in the cytoskeleton. The protein resides in the cell projection. Its subcellular location is the cilium. Its function is as follows. Plus end-directed microtubule-dependent motor protein that regulates the length of motile cilia by mediating depolymerization of microtubules at ciliary tips. The protein is Kinesin-like protein KIF19 (KIF19) of Homo sapiens (Human).